The primary structure comprises 208 residues: MVDNKDFNEELKENIQEELDNETKAENPNIDEEVEEVSEDIKADEKVIDFEELKALKEENTMFKSKTKKLENELEALKDRLLRISAEYENYRKRTDKEKERIYTDACEDVLIKMLPVLDNLERALAVDGTVEDLKKGVEMTVRQFEDALEKLQVEEISTENGFDPELHQAMMVVEQEGAEPNQVAQVFQKGYKRGDKVIRHSMVTVTK.

Residues 1–25 are compositionally biased toward basic and acidic residues; sequence MVDNKDFNEELKENIQEELDNETKA. A disordered region spans residues 1–38; sequence MVDNKDFNEELKENIQEELDNETKAENPNIDEEVEEVS. Acidic residues predominate over residues 29 to 38; it reads NIDEEVEEVS.

The protein belongs to the GrpE family. As to quaternary structure, homodimer.

It is found in the cytoplasm. In terms of biological role, participates actively in the response to hyperosmotic and heat shock by preventing the aggregation of stress-denatured proteins, in association with DnaK and GrpE. It is the nucleotide exchange factor for DnaK and may function as a thermosensor. Unfolded proteins bind initially to DnaJ; upon interaction with the DnaJ-bound protein, DnaK hydrolyzes its bound ATP, resulting in the formation of a stable complex. GrpE releases ADP from DnaK; ATP binding to DnaK triggers the release of the substrate protein, thus completing the reaction cycle. Several rounds of ATP-dependent interactions between DnaJ, DnaK and GrpE are required for fully efficient folding. This is Protein GrpE from Clostridium perfringens (strain ATCC 13124 / DSM 756 / JCM 1290 / NCIMB 6125 / NCTC 8237 / Type A).